The chain runs to 589 residues: L-fucose isomerase (589 aa).

Catalysis depends on proton acceptor residues E340 and D364. Residues E340, D364, and H527 each contribute to the Mn(2+) site.

The protein belongs to the L-fucose isomerase family. Mn(2+) serves as cofactor.

The protein localises to the cytoplasm. The enzyme catalyses L-fucose = L-fuculose. The protein operates within carbohydrate degradation; L-fucose degradation; L-lactaldehyde and glycerone phosphate from L-fucose: step 1/3. Its function is as follows. Converts the aldose L-fucose into the corresponding ketose L-fuculose. The polypeptide is L-fucose isomerase (Haemophilus influenzae (strain ATCC 51907 / DSM 11121 / KW20 / Rd)).